The primary structure comprises 386 residues: Zinc finger protein 385A (386 aa).

The Matrin-type 1 zinc-finger motif lies at 74-98 (ISCNVCQIRFNSQSQAEAHYKGNRH). The segment at 88 to 193 (QAEAHYKGNR…ASLPGGSKEE (106 aa)) is disordered. Residues 103 to 121 (KGIEAAKTRGREPSVRESG) are compositionally biased toward basic and acidic residues. The interval 145–351 (NGLGPAPGSP…AGSPLSLRPA (207 aa)) is necessary for binding to ITPR1, CEBPA and p53/TP53 mRNAs. Phosphoserine is present on Ser-185. The segment at 201 to 225 (LYCALCKVAVNSLSQLEAHNKGTKH) adopts a Matrin-type 2 zinc-finger fold. Thr-248 bears the Phosphothreonine mark. Residues 261-285 (FHCEICNVKVNSEVQLKQHISSRRH) form a Matrin-type 3 zinc finger. Residues 279–305 (HISSRRHRDGVAGKPNPLLSRHKKPRG) are disordered.

In terms of assembly, interacts with p53/TP53; the interaction is direct and enhances p53/TP53 transactivation functions on cell-cycle arrest target genes, resulting in growth arrest. Interacts with ELAVL1; the interaction is indirect, mRNA-dependent and may regulate p53/TP53 expression. Ubiquitinated upon prolonged exposure to genotoxic stress, which leads to proteasomal degradation of ZNF385A and releases p53/TP53 from cell-cycle arrest target gene promoters. As to expression, expressed in brain and testis (at protein level). In brain, the expression is located to olfactory bulb, cerebral cortex, hippocampus, satellite cells and Purkinje cells of the cerebellum molecular layer. Detected in bone marrow, white and brown adipose tissue, lung and at lower levels in the thymus.

It is found in the cytoplasm. The protein resides in the nucleus. Its subcellular location is the nucleolus. The protein localises to the cell projection. It localises to the dendrite. In terms of biological role, RNA-binding protein that affects the localization and the translation of a subset of mRNA. May play a role in adipogenesis through binding to the 3'-UTR of CEBPA mRNA and regulation of its translation. Targets ITPR1 mRNA to dendrites in Purkinje cells, and may regulate its activity-dependent translation. With ELAVL1, binds the 3'-UTR of p53/TP53 mRNAs to control their nuclear export induced by CDKN2A. Hence, may regulate p53/TP53 expression and mediate in part the CDKN2A anti-proliferative activity. May also bind CCNB1 mRNA. Alternatively, may also regulate p53/TP53 activity through direct protein-protein interaction. Interacts with p53/TP53 and promotes cell-cycle arrest over apoptosis enhancing preferentially the DNA binding and transactivation of p53/TP53 on cell-cycle arrest target genes over proapoptotic target genes. May also regulate the ubiquitination and stability of CDKN1A promoting DNA damage-induced cell cycle arrest. Also plays a role in megakaryocytes differentiation. This Mus musculus (Mouse) protein is Zinc finger protein 385A (Znf385a).